The following is a 115-amino-acid chain: Large ribosomal subunit protein bL20 (115 aa).

This sequence belongs to the bacterial ribosomal protein bL20 family.

In terms of biological role, binds directly to 23S ribosomal RNA and is necessary for the in vitro assembly process of the 50S ribosomal subunit. It is not involved in the protein synthesizing functions of that subunit. The chain is Large ribosomal subunit protein bL20 from Bdellovibrio bacteriovorus (strain ATCC 15356 / DSM 50701 / NCIMB 9529 / HD100).